Consider the following 377-residue polypeptide: Chaperone protein DnaJ (377 aa).

In terms of domain architecture, J spans 5 to 69 (EYYDRLGLSK…QKRAAYDQYG (65 aa)). The CR-type zinc-finger motif lies at 133 to 215 (GAEKEIHYNR…CHGTGREKQS (83 aa)). Residues cysteine 146, cysteine 149, cysteine 163, cysteine 166, cysteine 189, cysteine 192, cysteine 203, and cysteine 206 each coordinate Zn(2+). CXXCXGXG motif repeat units lie at residues 146-153 (CKTCSGSG), 163-170 (CGRCHGHG), 189-196 (CDVCHGTG), and 203-210 (CQTCHGTG).

It belongs to the DnaJ family. Homodimer. The cofactor is Zn(2+).

The protein localises to the cytoplasm. Its function is as follows. Participates actively in the response to hyperosmotic and heat shock by preventing the aggregation of stress-denatured proteins and by disaggregating proteins, also in an autonomous, DnaK-independent fashion. Unfolded proteins bind initially to DnaJ; upon interaction with the DnaJ-bound protein, DnaK hydrolyzes its bound ATP, resulting in the formation of a stable complex. GrpE releases ADP from DnaK; ATP binding to DnaK triggers the release of the substrate protein, thus completing the reaction cycle. Several rounds of ATP-dependent interactions between DnaJ, DnaK and GrpE are required for fully efficient folding. Also involved, together with DnaK and GrpE, in the DNA replication of plasmids through activation of initiation proteins. This chain is Chaperone protein DnaJ, found in Streptococcus thermophilus (strain CNRZ 1066).